The primary structure comprises 532 residues: Protein DETOXIFICATION 48 (532 aa).

The next 12 membrane-spanning stretches (helical) occupy residues 65–85 (ISGP…ISML), 95–115 (LAGG…VISG), 136–156 (LGLT…PISF), 174–194 (ISSV…LLSL), 211–231 (VTYS…LLVV), 235–255 (MGVA…VVLL), 279–301 (GWSA…WWWY), 322–342 (GILI…SLGV), 363–383 (IISL…AVLV), 397–417 (ILQL…GNCP), 437–457 (INLG…GFVF), and 464–484 (LWFG…CALL). Positions 496–532 (EELTSQTPGKSPPLLPIASSKSRSTSGTEDMMRTMLV) are disordered. Polar residues predominate over residues 514 to 523 (SSKSRSTSGT).

It belongs to the multi antimicrobial extrusion (MATE) (TC 2.A.66.1) family. In terms of tissue distribution, highly expressed in shoot apices relative to leaves. At vegetative stages, highly expressed at the stipules. At reproductive stages, most highly expressed in the mature pollen. Also expressed in the tips of sepals.

It is found in the golgi apparatus membrane. The protein resides in the late endosome membrane. Functionally, functions as a multidrug and toxin extrusion transporter. Contributes to iron homeostasis during stress responses and senescence. Could be involved in specifying the lateral organ initiation rate. May act as a negative regulator of hypocotyl cell elongation in the light. This Arabidopsis thaliana (Mouse-ear cress) protein is Protein DETOXIFICATION 48.